The sequence spans 97 residues: Co-chaperonin GroES (97 aa).

Belongs to the GroES chaperonin family. In terms of assembly, heptamer of 7 subunits arranged in a ring. Interacts with the chaperonin GroEL.

The protein resides in the cytoplasm. Its function is as follows. Together with the chaperonin GroEL, plays an essential role in assisting protein folding. The GroEL-GroES system forms a nano-cage that allows encapsulation of the non-native substrate proteins and provides a physical environment optimized to promote and accelerate protein folding. GroES binds to the apical surface of the GroEL ring, thereby capping the opening of the GroEL channel. The sequence is that of Co-chaperonin GroES from Aeromonas salmonicida (strain A449).